The primary structure comprises 421 residues: UDP-N-acetylglucosamine 1-carboxyvinyltransferase (421 aa).

Residue 22–23 (KN) coordinates phosphoenolpyruvate. R93 serves as a coordination point for UDP-N-acetyl-alpha-D-glucosamine. C117 serves as the catalytic Proton donor. At C117 the chain carries 2-(S-cysteinyl)pyruvic acid O-phosphothioketal. Residues 122-126 (RPVDL), D308, and I330 contribute to the UDP-N-acetyl-alpha-D-glucosamine site.

It belongs to the EPSP synthase family. MurA subfamily.

It localises to the cytoplasm. It carries out the reaction phosphoenolpyruvate + UDP-N-acetyl-alpha-D-glucosamine = UDP-N-acetyl-3-O-(1-carboxyvinyl)-alpha-D-glucosamine + phosphate. It functions in the pathway cell wall biogenesis; peptidoglycan biosynthesis. Its function is as follows. Cell wall formation. Adds enolpyruvyl to UDP-N-acetylglucosamine. The protein is UDP-N-acetylglucosamine 1-carboxyvinyltransferase of Pseudomonas fluorescens (strain SBW25).